An 882-amino-acid chain; its full sequence is Homeobox-leucine zipper protein ROC3 (882 aa).

Positions Asp104–His144 are disordered. Residues Asp107–Pro119 show a composition bias toward basic and acidic residues. Residues Ala133–Ala143 are compositionally biased toward basic residues. Positions Lys134–Gln193 form a DNA-binding region, homeobox. Positions Ile200–Arg263 form a coiled coil. An START domain is found at Gln340 to Ser584. The segment covering Ala782–Asn816 has biased composition (low complexity). The segment at Ala782–Leu820 is disordered.

Belongs to the HD-ZIP homeobox family. Class IV subfamily.

It is found in the nucleus. Its function is as follows. Probable transcription factor. The protein is Homeobox-leucine zipper protein ROC3 (ROC3) of Oryza sativa subsp. japonica (Rice).